The primary structure comprises 356 residues: UDP-N-acetylglucosamine--N-acetylmuramyl-(pentapeptide) pyrophosphoryl-undecaprenol N-acetylglucosamine transferase (356 aa).

3 residues coordinate UDP-N-acetyl-alpha-D-glucosamine: Arg-166, Ser-196, and Gln-290.

Belongs to the glycosyltransferase 28 family. MurG subfamily.

Its subcellular location is the cell membrane. The enzyme catalyses Mur2Ac(oyl-L-Ala-gamma-D-Glu-L-Lys-D-Ala-D-Ala)-di-trans,octa-cis-undecaprenyl diphosphate + UDP-N-acetyl-alpha-D-glucosamine = beta-D-GlcNAc-(1-&gt;4)-Mur2Ac(oyl-L-Ala-gamma-D-Glu-L-Lys-D-Ala-D-Ala)-di-trans,octa-cis-undecaprenyl diphosphate + UDP + H(+). It functions in the pathway cell wall biogenesis; peptidoglycan biosynthesis. In terms of biological role, cell wall formation. Catalyzes the transfer of a GlcNAc subunit on undecaprenyl-pyrophosphoryl-MurNAc-pentapeptide (lipid intermediate I) to form undecaprenyl-pyrophosphoryl-MurNAc-(pentapeptide)GlcNAc (lipid intermediate II). This Staphylococcus aureus (strain MRSA252) protein is UDP-N-acetylglucosamine--N-acetylmuramyl-(pentapeptide) pyrophosphoryl-undecaprenol N-acetylglucosamine transferase.